Consider the following 241-residue polypeptide: Octanoyltransferase (241 aa).

In terms of domain architecture, BPL/LPL catalytic spans 49 to 233; sequence GEASELVWLL…AFGEVFGPSE (185 aa). Substrate contacts are provided by residues 87–94, 162–164, and 175–177; these read RGGQVTYH, AIG, and GIS. Cys193 (acyl-thioester intermediate) is an active-site residue.

Belongs to the LipB family.

It is found in the cytoplasm. The catalysed reaction is octanoyl-[ACP] + L-lysyl-[protein] = N(6)-octanoyl-L-lysyl-[protein] + holo-[ACP] + H(+). It functions in the pathway protein modification; protein lipoylation via endogenous pathway; protein N(6)-(lipoyl)lysine from octanoyl-[acyl-carrier-protein]: step 1/2. Functionally, catalyzes the transfer of endogenously produced octanoic acid from octanoyl-acyl-carrier-protein onto the lipoyl domains of lipoate-dependent enzymes. Lipoyl-ACP can also act as a substrate although octanoyl-ACP is likely to be the physiological substrate. The polypeptide is Octanoyltransferase (Nitrobacter hamburgensis (strain DSM 10229 / NCIMB 13809 / X14)).